A 300-amino-acid polypeptide reads, in one-letter code: Non-secreted LysM effector LysM16 (300 aa).

Positions 176–222 constitute a LysM domain; that stretch reads EWHTVFSGDTCQLIEAEYGITLEKFIALNTYVNSTCGNIWPDYAYCV.

It belongs to the secreted LysM effector family.

Non-secreted LysM effector that might be involved in manipulation of host defenses for successful infection. This is Non-secreted LysM effector LysM16 from Penicillium expansum (Blue mold rot fungus).